The primary structure comprises 327 residues: Malate dehydrogenase (327 aa).

12-18 (GAAGQIG) provides a ligand contact to NAD(+). Substrate contacts are provided by Arg-93 and Arg-99. Residues Asn-106, Gln-113, and 130-132 (VGN) each bind NAD(+). The substrate site is built by Asn-132 and Arg-163. Residue His-188 is the Proton acceptor of the active site.

The protein belongs to the LDH/MDH superfamily. MDH type 2 family.

The enzyme catalyses (S)-malate + NAD(+) = oxaloacetate + NADH + H(+). Its function is as follows. Catalyzes the reversible oxidation of malate to oxaloacetate. The protein is Malate dehydrogenase of Cupriavidus metallidurans (strain ATCC 43123 / DSM 2839 / NBRC 102507 / CH34) (Ralstonia metallidurans).